Here is a 98-residue protein sequence, read N- to C-terminus: NADH-ubiquinone oxidoreductase chain 4L (98 aa).

Helical transmembrane passes span 1 to 21, 25 to 45, and 59 to 81; these read MSLV…GLLM, HLMS…VMAT, and MPII…LVMV.

Belongs to the complex I subunit 4L family. Core subunit of respiratory chain NADH dehydrogenase (Complex I) which is composed of 45 different subunits.

The protein resides in the mitochondrion inner membrane. It catalyses the reaction a ubiquinone + NADH + 5 H(+)(in) = a ubiquinol + NAD(+) + 4 H(+)(out). In terms of biological role, core subunit of the mitochondrial membrane respiratory chain NADH dehydrogenase (Complex I) which catalyzes electron transfer from NADH through the respiratory chain, using ubiquinone as an electron acceptor. Part of the enzyme membrane arm which is embedded in the lipid bilayer and involved in proton translocation. In Equus caballus (Horse), this protein is NADH-ubiquinone oxidoreductase chain 4L (MT-ND4L).